Consider the following 394-residue polypeptide: NADH dehydrogenase [ubiquinone] iron-sulfur protein 2 (394 aa).

It belongs to the complex I 49 kDa subunit family. As to quaternary structure, complex I is composed of at least 49 different subunits. This is a component of the iron-sulfur (IP) fragment of the enzyme.

Its subcellular location is the mitochondrion. It catalyses the reaction a ubiquinone + NADH + 5 H(+)(in) = a ubiquinol + NAD(+) + 4 H(+)(out). Functionally, core subunit of the mitochondrial membrane respiratory chain NADH dehydrogenase (Complex I) that is believed to belong to the minimal assembly required for catalysis. Complex I functions in the transfer of electrons from NADH to the respiratory chain. The immediate electron acceptor for the enzyme is believed to be ubiquinone. Component of the iron-sulfur (IP) fragment of the enzyme. In Arabidopsis thaliana (Mouse-ear cress), this protein is NADH dehydrogenase [ubiquinone] iron-sulfur protein 2 (NAD7).